Here is a 115-residue protein sequence, read N- to C-terminus: Variant surface glycoprotein ANTAT 1.8 (115 aa).

Residue N42 is glycosylated (N-linked (GlcNAc...) asparagine). D92 is lipidated: GPI-anchor amidated aspartate. Residues 93 to 115 constitute a propeptide, removed in mature form; it reads SSILVNKQLALSVVSAAFAALLF.

Its subcellular location is the cell membrane. In terms of biological role, VSG forms a coat on the surface of the parasite. The trypanosome evades the immune response of the host by expressing a series of antigenically distinct VSGs from an estimated 1000 VSG genes. This is Variant surface glycoprotein ANTAT 1.8 from Trypanosoma brucei brucei.